Consider the following 466-residue polypeptide: Putative multidrug resistance protein MdtD (466 aa).

Helical transmembrane passes span 11-31 (LWIV…VNTA), 48-68 (SVIV…GWLA), 71-91 (IGVK…SLLC), 105-125 (VIQG…VMKI), 137-157 (FVTL…GFLV), 164-184 (WIFL…WFLM), 194-214 (FDIS…LALD), 218-238 (SLGI…IALL), 262-282 (FSIG…LPFM), 286-306 (FLQL…VPMV), 328-347 (VLIV…ALVA), 351-370 (WIWM…AIRF), 403-423 (LGVS…MAAG), and 429-449 (MVFI…ALIF).

This sequence belongs to the major facilitator superfamily. TCR/Tet family.

Its subcellular location is the cell inner membrane. In Pectobacterium carotovorum subsp. carotovorum (strain PC1), this protein is Putative multidrug resistance protein MdtD.